The sequence spans 310 residues: Oxygen-dependent coproporphyrinogen-III oxidase (310 aa).

Ser97 is a binding site for substrate. Residues His101 and His111 each contribute to the a divalent metal cation site. His111 serves as the catalytic Proton donor. Residue 113–115 participates in substrate binding; it reads NFR. Residues His150 and His180 each contribute to the a divalent metal cation site. Residues 245 to 280 are important for dimerization; the sequence is YVEFNLLYDRGTRFGLEFGGRTESILMSLPPRVVWR. 263 to 265 is a binding site for substrate; that stretch reads GGR.

This sequence belongs to the aerobic coproporphyrinogen-III oxidase family. As to quaternary structure, homodimer. Requires a divalent metal cation as cofactor.

The protein localises to the cytoplasm. It catalyses the reaction coproporphyrinogen III + O2 + 2 H(+) = protoporphyrinogen IX + 2 CO2 + 2 H2O. The protein operates within porphyrin-containing compound metabolism; protoporphyrin-IX biosynthesis; protoporphyrinogen-IX from coproporphyrinogen-III (O2 route): step 1/1. Functionally, involved in the heme biosynthesis. Catalyzes the aerobic oxidative decarboxylation of propionate groups of rings A and B of coproporphyrinogen-III to yield the vinyl groups in protoporphyrinogen-IX. This Coxiella burnetii (strain RSA 493 / Nine Mile phase I) protein is Oxygen-dependent coproporphyrinogen-III oxidase.